The chain runs to 178 residues: Dual-action ribosomal maturation protein DarP (178 aa).

It belongs to the DarP family.

It is found in the cytoplasm. Functionally, member of a network of 50S ribosomal subunit biogenesis factors which assembles along the 30S-50S interface, preventing incorrect 23S rRNA structures from forming. Promotes peptidyl transferase center (PTC) maturation. This is Dual-action ribosomal maturation protein DarP from Haemophilus influenzae (strain 86-028NP).